A 292-amino-acid polypeptide reads, in one-letter code: MHKFWPRHSPNFMACRVAVRTVQPRDITVGLSGGADSLALVAALCAEDYNVHALCVDHGLQPGSHEVAQQAAHHARTFGAHAEIISVTVAPGNLEANARTARYQALHSRNLPVVVGHTADDQAETLLLGALRGKATGMQIHTDNLWRPLLGVRRATTLAACTELGIEPWHDPHNANTDFLRVALRTQVVPLLSDIIGGDAVPALSQAATLIAEDTHALHVDTPDDRIAQLAGMPPALRRRHLVALLQAYGARVSAAHLRAVDALITNWHGQKAVPVGNGLEVTRKDGRLSVS.

Ser-32–Ser-37 lines the ATP pocket.

The protein belongs to the tRNA(Ile)-lysidine synthase family.

It localises to the cytoplasm. It carries out the reaction cytidine(34) in tRNA(Ile2) + L-lysine + ATP = lysidine(34) in tRNA(Ile2) + AMP + diphosphate + H(+). Ligates lysine onto the cytidine present at position 34 of the AUA codon-specific tRNA(Ile) that contains the anticodon CAU, in an ATP-dependent manner. Cytidine is converted to lysidine, thus changing the amino acid specificity of the tRNA from methionine to isoleucine. This is tRNA(Ile)-lysidine synthase from Corynebacterium diphtheriae (strain ATCC 700971 / NCTC 13129 / Biotype gravis).